Here is a 122-residue protein sequence, read N- to C-terminus: Large ribosomal subunit protein bL12 (122 aa).

This sequence belongs to the bacterial ribosomal protein bL12 family. In terms of assembly, homodimer. Part of the ribosomal stalk of the 50S ribosomal subunit. Forms a multimeric L10(L12)X complex, where L10 forms an elongated spine to which 2 to 4 L12 dimers bind in a sequential fashion. Binds GTP-bound translation factors.

Its function is as follows. Forms part of the ribosomal stalk which helps the ribosome interact with GTP-bound translation factors. Is thus essential for accurate translation. The protein is Large ribosomal subunit protein bL12 of Glaesserella parasuis serovar 5 (strain SH0165) (Haemophilus parasuis).